Here is a 120-residue protein sequence, read N- to C-terminus: Holo-[acyl-carrier-protein] synthase (120 aa).

Positions 8 and 60 each coordinate Mg(2+).

The protein belongs to the P-Pant transferase superfamily. AcpS family. The cofactor is Mg(2+).

It is found in the cytoplasm. It carries out the reaction apo-[ACP] + CoA = holo-[ACP] + adenosine 3',5'-bisphosphate + H(+). In terms of biological role, transfers the 4'-phosphopantetheine moiety from coenzyme A to a Ser of acyl-carrier-protein. This is Holo-[acyl-carrier-protein] synthase from Anaplasma marginale (strain St. Maries).